The sequence spans 356 residues: OVARIAN TUMOR DOMAIN-containing deubiquitinating enzyme 10 (356 aa).

The interval 86-117 (DYSHQNQQQQHQQEGYTNNYSNNNNGYAWNDQ) is disordered. Positions 89-115 (HQNQQQQHQQEGYTNNYSNNNNGYAWN) are enriched in low complexity. The region spanning 213–337 (FTEVKVPGDG…EVHYNAIYLN (125 aa)) is the OTU domain. Asp-221 is an active-site residue. Cys-224 acts as the Nucleophile in catalysis. His-330 is an active-site residue.

Belongs to the peptidase C85 family.

It catalyses the reaction Thiol-dependent hydrolysis of ester, thioester, amide, peptide and isopeptide bonds formed by the C-terminal Gly of ubiquitin (a 76-residue protein attached to proteins as an intracellular targeting signal).. In terms of biological role, hydrolase that can remove conjugated ubiquitin from proteins in vitro and may therefore play an important regulatory role at the level of protein turnover by preventing degradation. Cysteine protease with a preference for 'Lys-63' over 'Lys-48' over 'Met-1' -linked ubiquitin (UB) tetramers as substrates. Also cleaves RUB-GST fusion. In Arabidopsis thaliana (Mouse-ear cress), this protein is OVARIAN TUMOR DOMAIN-containing deubiquitinating enzyme 10.